Here is a 2157-residue protein sequence, read N- to C-terminus: Mediator of RNA polymerase II transcription subunit 12-like protein (2157 aa).

A disordered region spans residues 1 to 31 (MAAFGLLSYEQRPLKRPRLGPPDVYPQDPKQ). Threonine 462 is modified (phosphothreonine). Residues 1437 to 1456 (ELEKGQHLGSSSKKERDRQK) show a composition bias toward basic and acidic residues. Disordered regions lie at residues 1437–1461 (ELEK…KSMS), 1724–1807 (RSYY…SQMT), and 2040–2157 (IDAV…PSHF). Basic residues predominate over residues 1771-1780 (TKGRKRKTKS). Composition is skewed to low complexity over residues 2063-2076 (PRQQ…RLLQ), 2083-2101 (QQPQ…QSQA), and 2116-2136 (RQGL…RQLQ). Over residues 2137–2148 (KQLSSNQPQQGV) the composition is skewed to polar residues.

Belongs to the Mediator complex subunit 12 family. May be a component of the Mediator complex, which is known to be composed of MED1, MED4, MED6, MED7, MED8, MED9, MED10, MED11, MED12, MED13, MED13L, MED14, MED15, MED16, MED17, MED18, MED19, MED20, MED21, MED22, MED23, MED24, MED25, MED26, MED27, MED29, MED30, MED31, CCNC, CDK8 and CDC2L6/CDK11. The MED12, MED13, CCNC and CDK8 subunits form a distinct module termed the CDK8 module. Mediator containing the CDK8 module is less active than Mediator lacking this module in supporting transcriptional activation. Individual preparations of the Mediator complex lacking one or more distinct subunits have been variously termed ARC, CRSP, DRIP, PC2, SMCC and TRAP.

The protein localises to the nucleus. Its function is as follows. May be a component of the Mediator complex, a coactivator involved in the regulated transcription of nearly all RNA polymerase II-dependent genes. Mediator functions as a bridge to convey information from gene-specific regulatory proteins to the basal RNA polymerase II transcription machinery. Mediator is recruited to promoters by direct interactions with regulatory proteins and serves as a scaffold for the assembly of a functional preinitiation complex with RNA polymerase II and the general transcription factors. The sequence is that of Mediator of RNA polymerase II transcription subunit 12-like protein (Med12l) from Mus musculus (Mouse).